The primary structure comprises 159 residues: MQKNMKTKKTKKRGRKEGNTPETERRMEPARSRTSAIPSGLRRRSGPSTPLRPGPEVRHAPTWRTASATTADSHRISPPYTPSSRGRHIHTRGARTRTRETSAAEINGVYARAVTRKTKRSETIDRLLLSVLPGHGPHASLRSHLRARSALRPPPDPPR.

Basic residues predominate over residues 1–15 (MQKNMKTKKTKKRGR). Disordered stretches follow at residues 1-100 (MQKN…RTRE) and 133-159 (PGHG…DPPR). Residues 16 to 31 (KEGNTPETERRMEPAR) show a composition bias toward basic and acidic residues. Over residues 85–96 (RGRHIHTRGART) the composition is skewed to basic residues.

The chain is Protein B1 (B1) from Human herpesvirus 6B (strain Z29) (HHV-6 variant B).